The chain runs to 234 residues: Purine nucleoside phosphorylase DeoD-type (234 aa).

A purine D-ribonucleoside is bound at residue His4. Residues Gly20, Arg24, Arg43, and 87-90 (RVGT) contribute to the phosphate site. A purine D-ribonucleoside-binding positions include Glu162, 178–180 (EME), and 202–203 (SD). Asp203 (proton donor) is an active-site residue.

Belongs to the PNP/UDP phosphorylase family. As to quaternary structure, homohexamer; trimer of homodimers.

It catalyses the reaction a purine D-ribonucleoside + phosphate = a purine nucleobase + alpha-D-ribose 1-phosphate. The enzyme catalyses a purine 2'-deoxy-D-ribonucleoside + phosphate = a purine nucleobase + 2-deoxy-alpha-D-ribose 1-phosphate. Catalyzes the reversible phosphorolytic breakdown of the N-glycosidic bond in the beta-(deoxy)ribonucleoside molecules, with the formation of the corresponding free purine bases and pentose-1-phosphate. In Anoxybacillus flavithermus (strain DSM 21510 / WK1), this protein is Purine nucleoside phosphorylase DeoD-type.